The primary structure comprises 176 residues: Large ribosomal subunit protein bL19 (176 aa).

It belongs to the bacterial ribosomal protein bL19 family.

This protein is located at the 30S-50S ribosomal subunit interface and may play a role in the structure and function of the aminoacyl-tRNA binding site. This Sinorhizobium fredii (strain NBRC 101917 / NGR234) protein is Large ribosomal subunit protein bL19.